Reading from the N-terminus, the 248-residue chain is ATP synthase subunit a (248 aa).

Positions 1–3 (MLY) are cleaved as a propeptide — removed in mature form. The next 7 membrane-spanning stretches (helical) occupy residues 24–44 (MSLT…FFIF), 86–106 (IYMP…LVGL), 117–137 (FALP…IGFV), 146–166 (VLLP…VELL), 183–203 (ITSG…TSGI), 205–225 (LLFV…ELIV), and 227–247 (ILQA…SLIL).

Belongs to the ATPase A chain family. F-type ATPases have 2 components, CF(1) - the catalytic core - and CF(0) - the membrane proton channel. CF(1) has five subunits: alpha(3), beta(3), gamma(1), delta(1), epsilon(1). CF(0) has three main subunits: a, b and c.

It is found in the mitochondrion inner membrane. Mitochondrial membrane ATP synthase (F(1)F(0) ATP synthase or Complex V) produces ATP from ADP in the presence of a proton gradient across the membrane which is generated by electron transport complexes of the respiratory chain. F-type ATPases consist of two structural domains, F(1) - containing the extramembraneous catalytic core and F(0) - containing the membrane proton channel, linked together by a central stalk and a peripheral stalk. During catalysis, ATP synthesis in the catalytic domain of F(1) is coupled via a rotary mechanism of the central stalk subunits to proton translocation. Key component of the proton channel; it may play a direct role in the translocation of protons across the membrane. This chain is ATP synthase subunit a, found in Zancudomyces culisetae (Gut fungus).